The chain runs to 92 residues: Small ribosomal subunit protein uS19 (92 aa).

Belongs to the universal ribosomal protein uS19 family.

In terms of biological role, protein S19 forms a complex with S13 that binds strongly to the 16S ribosomal RNA. The protein is Small ribosomal subunit protein uS19 of Streptococcus agalactiae serotype Ia (strain ATCC 27591 / A909 / CDC SS700).